A 120-amino-acid polypeptide reads, in one-letter code: uncharacterized protein (120 aa).

The signal sequence occupies residues 1 to 22 (MSTSGMLFIFATFCPCFLSCCA). Over 23 to 59 (FMSHWKLKDFSFRFLRMCGERSLVVCYPLKLLKQIRS) the chain is Extracellular. A helical transmembrane segment spans residues 60 to 80 (LFSIAIGHLSLMLIEGSANLL). The Cytoplasmic segment spans residues 81–120 (SLEEISRTLLRILDFVGNKNMRTYLEVPLCRWHISQARPN).

Its subcellular location is the membrane. This is an uncharacterized protein from Schizosaccharomyces pombe (strain 972 / ATCC 24843) (Fission yeast).